Here is a 97-residue protein sequence, read N- to C-terminus: uncharacterized protein (97 aa).

Positions 1 to 16 (MKQTVLLLFTALFLSG) are cleaved as a signal peptide. Cys17 is lipidated: N-palmitoyl cysteine. A lipid anchor (S-diacylglycerol cysteine) is attached at Cys17.

The protein resides in the cell membrane. This is an uncharacterized protein from Bacillus subtilis (strain 168).